The sequence spans 299 residues: Tyrosine recombinase XerC (299 aa).

Residues 1–85 (MQADLDAFLD…ALRGFYRYLL (85 aa)) enclose the Core-binding (CB) domain. A Tyr recombinase domain is found at 106–285 (RLPRTLDADR…DFQHLAAVYD (180 aa)). Catalysis depends on residues Arg-146, Lys-170, His-237, Arg-240, and His-263. Tyr-272 (O-(3'-phospho-DNA)-tyrosine intermediate) is an active-site residue.

It belongs to the 'phage' integrase family. XerC subfamily. Forms a cyclic heterotetrameric complex composed of two molecules of XerC and two molecules of XerD.

Its subcellular location is the cytoplasm. In terms of biological role, site-specific tyrosine recombinase, which acts by catalyzing the cutting and rejoining of the recombining DNA molecules. The XerC-XerD complex is essential to convert dimers of the bacterial chromosome into monomers to permit their segregation at cell division. It also contributes to the segregational stability of plasmids. This chain is Tyrosine recombinase XerC, found in Azotobacter vinelandii (strain DJ / ATCC BAA-1303).